The chain runs to 52 residues: Large ribosomal subunit protein bL33 (52 aa).

Belongs to the bacterial ribosomal protein bL33 family.

The polypeptide is Large ribosomal subunit protein bL33 (Chlamydia trachomatis serovar A (strain ATCC VR-571B / DSM 19440 / HAR-13)).